We begin with the raw amino-acid sequence, 188 residues long: Elongation factor P-like protein (188 aa).

The protein belongs to the elongation factor P family.

The protein is Elongation factor P-like protein of Marinobacter nauticus (strain ATCC 700491 / DSM 11845 / VT8) (Marinobacter aquaeolei).